We begin with the raw amino-acid sequence, 207 residues long: ATP synthase subunit 5, mitochondrial (207 aa).

This sequence belongs to the ATPase delta chain family. F-type ATPases have 2 components, CF(1) - the catalytic core - and CF(0) - the membrane proton channel. CF(1) has five subunits: alpha(3), beta(3), gamma(1), delta(1), epsilon(1). CF(0) has three main subunits: a, b and c.

The protein resides in the mitochondrion. It localises to the mitochondrion inner membrane. In terms of biological role, mitochondrial membrane ATP synthase (F(1)F(0) ATP synthase or Complex V) produces ATP from ADP in the presence of a proton gradient across the membrane which is generated by electron transport complexes of the respiratory chain. F-type ATPases consist of two structural domains, F(1) - containing the extramembraneous catalytic core and F(0) - containing the membrane proton channel, linked together by a central stalk and a peripheral stalk. During catalysis, ATP synthesis in the catalytic domain of F(1) is coupled via a rotary mechanism of the central stalk subunits to proton translocation. Part of the complex F(0) domain and the peripheric stalk, which acts as a stator to hold the catalytic alpha(3)beta(3) subcomplex and subunit a/ATP6 static relative to the rotary elements. The sequence is that of ATP synthase subunit 5, mitochondrial (ATP5) from Eremothecium gossypii (strain ATCC 10895 / CBS 109.51 / FGSC 9923 / NRRL Y-1056) (Yeast).